A 634-amino-acid polypeptide reads, in one-letter code: tRNA uridine 5-carboxymethylaminomethyl modification enzyme MnmG (634 aa).

Position 14-19 (14-19) interacts with FAD; sequence GGGHAG. Position 279–293 (279–293) interacts with NAD(+); it reads GPRYCPSIEDKVVRF.

It belongs to the MnmG family. Homodimer. Heterotetramer of two MnmE and two MnmG subunits. The cofactor is FAD.

The protein localises to the cytoplasm. NAD-binding protein involved in the addition of a carboxymethylaminomethyl (cmnm) group at the wobble position (U34) of certain tRNAs, forming tRNA-cmnm(5)s(2)U34. The sequence is that of tRNA uridine 5-carboxymethylaminomethyl modification enzyme MnmG from Xanthomonas campestris pv. campestris (strain B100).